We begin with the raw amino-acid sequence, 876 residues long: ATP-dependent helicase Lhr-Core (876 aa).

Positions 37, 60, 61, 175, 176, 374, and 377 each coordinate ATP. Residues Ile41 to Glu232 enclose the Helicase ATP-binding domain. The short motif at Asp175 to His178 is the DEAH box element. A Helicase C-terminal domain is found at Pro249–Asp421. A WH domain region spans residues Val422–Pro506. The segment at Asp507–Lys876 is domain 4.

This sequence belongs to the Lhr helicase family. Lhr-Core subfamily. Monomer.

The enzyme catalyses Couples ATP hydrolysis with the unwinding of duplex DNA by translocating in the 3'-5' direction.. The catalysed reaction is ATP + H2O = ADP + phosphate + H(+). Its function is as follows. Probably part of a 4-gene DNA damage response locus in which the upstream ups system, in combination with this downstream locus, functions in homologous recombination to rescue Sulfolobales from DNA-damaging threats. DNA helicase that translocates in a 3'-5' direction on single-stranded (ss)DNA. Binds Holliday junction (HJ) DNA, Y-shaped DNA, DNA with a 3'-overhang and single-stranded (ss)DNA with high affinity; binds double-stranded (ds)DNA with less affinity. Has helicase activity on DNA with a 3'-overhang, Y-shaped DNA and HJ DNA. Does not unwind blunt-ended dsDNA or DNA with a 5'-overhang. This chain is ATP-dependent helicase Lhr-Core, found in Sulfolobus acidocaldarius (strain ATCC 33909 / DSM 639 / JCM 8929 / NBRC 15157 / NCIMB 11770).